A 319-amino-acid chain; its full sequence is Biotin synthase (319 aa).

Positions 44-273 constitute a Radical SAM core domain; that stretch reads IHGDGIDLCS…EAKIRLAGGR (230 aa). Cys-62, Cys-66, and Cys-69 together coordinate [4Fe-4S] cluster. [2Fe-2S] cluster-binding residues include Ser-106, Cys-138, Cys-198, and Arg-268.

Belongs to the radical SAM superfamily. Biotin synthase family. In terms of assembly, homodimer. It depends on [4Fe-4S] cluster as a cofactor. [2Fe-2S] cluster serves as cofactor.

It catalyses the reaction (4R,5S)-dethiobiotin + (sulfur carrier)-SH + 2 reduced [2Fe-2S]-[ferredoxin] + 2 S-adenosyl-L-methionine = (sulfur carrier)-H + biotin + 2 5'-deoxyadenosine + 2 L-methionine + 2 oxidized [2Fe-2S]-[ferredoxin]. It participates in cofactor biosynthesis; biotin biosynthesis; biotin from 7,8-diaminononanoate: step 2/2. Its function is as follows. Catalyzes the conversion of dethiobiotin (DTB) to biotin by the insertion of a sulfur atom into dethiobiotin via a radical-based mechanism. This Clostridium perfringens (strain 13 / Type A) protein is Biotin synthase.